Reading from the N-terminus, the 1022-residue chain is Sodium-dependent transporter snf-12 (1022 aa).

At 1 to 165 (MNGEWKSALR…RRELWRTQKD (165 aa)) the chain is on the cytoplasmic side. The helical transmembrane segment at 166 to 185 (FFLSCLGFMVGVGHTMRFPA) threads the bilayer. The Extracellular segment spans residues 186-192 (KVYQHGG). Residues 193–213 (GVFFIPYLFSLIFFGLPLVFL) traverse the membrane as a helical segment. The Cytoplasmic portion of the chain corresponds to 214–241 (HLSLGQYTGQAANTAFQRLMPIGSGVGW). Residues 242 to 262 (ALVVIAIPVAVYYNIIVAWAI) form a helical membrane-spanning segment. Topologically, residues 263 to 337 (HYFFQSAKGL…DFALGPLQSH (75 aa)) are extracellular. A helical membrane pass occupies residues 338–358 (LVLSLAAAWLLVFFGVFKGLG). Residue S359 is a topological domain, cytoplasmic. Residues 360 to 380 (IAQTMNVTATVPYLLLSILLL) traverse the membrane as a helical segment. Over 381–412 (RGISLPGANKGLTFLFTVDSTKLWKWQIWKSA) the chain is Extracellular. A helical transmembrane segment spans residues 413–433 (AEQVFYELGIDAGPLISMAAF). The Cytoplasmic segment spans residues 434-444 (SRYRNNIYRDS). Residues 445–465 (VLLVIMDALTSCLSGMVIFSF) form a helical membrane-spanning segment. Residues 466-498 (VGFIASESNSNVNDVLKHDPLYLSFTVYPGVTS) are Extracellular-facing. A helical transmembrane segment spans residues 499–519 (FMYWGGLWATLFFGMLVLAAI). Residues 520 to 550 (DAEFAWLEMIASAFMNHFSMKNKAVENRLLA) lie on the Cytoplasmic side of the membrane. A helical membrane pass occupies residues 551-571 (FLCLAGFFLGLPLCAQGGIFV). Topologically, residues 572-584 (FHAIENLNANWNS) are extracellular. A helical transmembrane segment spans residues 585-605 (FSLALLSVAIVCYVYGIDNYL). Over 606–641 (TDISAMLRVPRIQISKATRLKEKLIYFFGPGGIYIK) the chain is Cytoplasmic. Residues 642–662 (FSLCFICPVILTVLLVASVLG) form a helical membrane-spanning segment. The Extracellular portion of the chain corresponds to 663–677 (YQRISFAGRPIPIDY). The helical transmembrane segment at 678-698 (EIVAWIVMIGPLLVVPLVAFM) threads the bilayer. Topologically, residues 699-1022 (QIRQIRNEGK…RPKPIDMPPK (324 aa)) are cytoplasmic. Disordered regions lie at residues 867–948 (RIPN…SSDD) and 995–1022 (IYDQ…MPPK). Pro residues predominate over residues 893–907 (SDPPVPTSPLPPPPK). The segment covering 933–943 (DDSPSISNSSD) has biased composition (low complexity).

Belongs to the sodium:neurotransmitter symporter (SNF) (TC 2.A.22) family. May interact with STAT family transcription factor sta-2; the interaction is probably direct.

It localises to the membrane. It is found in the cytoplasm. The protein localises to the vesicle. Functionally, probably mediates sodium-dependent uptake of unknown small molecule(s). By positively modulating expression, in the epidermis, of antimicrobial peptides such as nlp-29, plays a role in resistance to fungal infection and in the response to physical wounding and phorbol ester PMA treatment. Role in response to wounding of the epidermis may be facilitated by recruitment of snf-12 to the wound site by microtubule-dependent vesicle trafficking. Functions cell autonomously in the epidermis, in concert with STAT transcription factor sta-2, probably acting at vesicular membranes, downstream of a p38 MAPK/pmk-1 pathway. This chain is Sodium-dependent transporter snf-12, found in Caenorhabditis elegans.